The primary structure comprises 90 residues: Acyl-CoA-binding protein (90 aa).

The span at 1-16 shows a compositional bias: basic and acidic residues; the sequence is MGLKEDFEEHAEKAKT. A disordered region spans residues 1-20; it reads MGLKEDFEEHAEKAKTLPEN. An ACB domain is found at 3-88; it reads LKEDFEEHAE…VKQLLGEAAA (86 aa). An acyl-CoA contacts are provided by residues 30–34, K56, and Y75; that span reads YGLYK.

Belongs to the ACBP family.

Binds medium- and long-chain acyl-CoA esters with very high affinity and may function as an intracellular carrier of acyl-CoA esters. In Ricinus communis (Castor bean), this protein is Acyl-CoA-binding protein.